The following is a 323-amino-acid chain: Galectin-4 (323 aa).

2 consecutive Galectin domains span residues 19-150 (YYKP…INFI) and 194-323 (YKTR…YVQI). An a beta-D-galactoside-binding site is contributed by 256–262 (WGAEERK).

As to quaternary structure, monomer.

In terms of biological role, galectin that binds lactose and a related range of sugars. May be involved in the assembly of adherens junctions. This chain is Galectin-4 (LGALS4), found in Sus scrofa (Pig).